Consider the following 90-residue polypeptide: MKLDNPHRYIGETIVLTNPSNNSQYLLNLEQQGYADEETKTLINMIRLLVEENKYLRKENNLLAKSHRGVGGLCRTQTRKRRAKSPLLYR.

The polypeptide is Putative protein p49 (49) (Escherichia coli (Bacteriophage APSE-1)).